The sequence spans 81 residues: Lantipeptide prochlorosin 1.1 (81 aa).

A propeptide spanning residues Met1 to Gly65 is cleaved from the precursor. Positions Cys68 to Thr72 form a cross-link, beta-methyllanthionine (Cys-Thr). Positions Thr77 to Cys81 form a cross-link, beta-methyllanthionine (Thr-Cys).

Cross-links are proved in vitro, when coepressed in E.coli with the ProcM lanthionine synthetase. In terms of processing, the beta-methyllanthionine residues have a DL configuration (with 2S,3S,6R stereochemistry). Post-translationally, maturation of prochlorosin involves the enzymatic conversion of Thr, and Ser into dehydrated AA and the formation of thioether bonds with cysteines. This is followed by membrane translocation and cleavage of the modified precursor.

It is found in the secreted. Its function is as follows. Lanthionine-containing peptide (lantipeptide) with unknown function. Does not show antibiotic activity against Lactococcus lactis 117 and Bacillus subtilis 6633 bacteria. Organisms that produce this peptide live in oligotrophic environments at very dilute concentrations, suggesting this peptide is not secreted to influence other bacteria. This is Lantipeptide prochlorosin 1.1 from Prochlorococcus marinus (strain MIT 9313).